A 700-amino-acid polypeptide reads, in one-letter code: Glutamine synthetase (700 aa).

The GS beta-grasp domain maps to 65-155 (YHFTPPGSSP…LPTAFCSYGG (91 aa)). The region spanning 159-589 (DRDSLLRSME…TMQEMIRKDL (431 aa)) is the GS catalytic domain. Mg(2+) is bound by residues glutamate 196, glutamate 198, glutamate 267, and glutamate 274. Residues 318 to 319 (NG) and glycine 319 each bind L-glutamate. A Mg(2+)-binding site is contributed by histidine 323. Residues serine 327 and arginine 435 each coordinate ATP. Arginine 435 provides a ligand contact to L-glutamate. Mg(2+) is bound at residue glutamate 472.

The protein belongs to the glutamine synthetase family. Homohexamer. The cofactor is Mg(2+).

The protein localises to the cytoplasm. The catalysed reaction is L-glutamate + NH4(+) + ATP = L-glutamine + ADP + phosphate + H(+). Its activity is regulated as follows. The activity of this enzyme is not controlled by adenylation. In terms of biological role, catalyzes the ATP-dependent biosynthesis of glutamine from glutamate and ammonia. This is Glutamine synthetase from Butyrivibrio fibrisolvens.